The chain runs to 294 residues: Phosphate import ATP-binding protein PstB (294 aa).

Over residues 1–18 (MSETMTNQNVVNEEQPFN) the composition is skewed to polar residues. The disordered stretch occupies residues 1–24 (MSETMTNQNVVNEEQPFNESKHRS). Residues 48–289 (LEVNKLKLFY…PSCKQTEDYI (242 aa)) enclose the ABC transporter domain. 80–87 (GPSGCGKS) serves as a coordination point for ATP.

It belongs to the ABC transporter superfamily. Phosphate importer (TC 3.A.1.7) family. In terms of assembly, the complex is composed of two ATP-binding proteins (PstB), two transmembrane proteins (PstC and PstA) and a solute-binding protein (PstS).

Its subcellular location is the cell inner membrane. It catalyses the reaction phosphate(out) + ATP + H2O = ADP + 2 phosphate(in) + H(+). Functionally, part of the ABC transporter complex PstSACB involved in phosphate import. Responsible for energy coupling to the transport system. The chain is Phosphate import ATP-binding protein PstB from Hahella chejuensis (strain KCTC 2396).